Here is a 174-residue protein sequence, read N- to C-terminus: Guided entry of tail-anchored proteins factor 1 (174 aa).

Residues M1–R8 lie on the Lumenal side of the membrane. Residues W9 to P29 form a helical membrane-spanning segment. The Cytoplasmic segment spans residues S30–K99. Residues L39–T94 are a coiled coil. The tract at residues L39–L97 is interaction with GET3/TRC40. Residues I100–I120 form a helical membrane-spanning segment. The Lumenal segment spans residues W121–R148. Residues V149–V169 form a helical membrane-spanning segment. The Cytoplasmic segment spans residues L170–S174.

This sequence belongs to the WRB/GET1 family. Component of the Golgi to ER traffic (GET) complex, which is composed of GET1, CAMLG/GET2 and GET3. Within the complex, GET1 and CAMLG form a heterotetramer which is stabilized by phosphatidylinositol binding and which binds to the GET3 homodimer. Interacts with CAMLG/GET2 (via C-terminus). GET3 shows a higher affinity for CAMLG than for GET1.

The protein resides in the endoplasmic reticulum membrane. Required for the post-translational delivery of tail-anchored (TA) proteins to the endoplasmic reticulum. Together with CAMLG/GET2, acts as a membrane receptor for soluble GET3/TRC40, which recognizes and selectively binds the transmembrane domain of TA proteins in the cytosol. Required to ensure correct topology and ER insertion of CAMLG. This chain is Guided entry of tail-anchored proteins factor 1, found in Mus musculus (Mouse).